The following is a 279-amino-acid chain: uncharacterized protein (279 aa).

The HTH rpiR-type domain occupies 1 to 77; sequence MGILEQLENP…VTLAKEISNK (77 aa). The H-T-H motif DNA-binding region spans 37 to 56; that stretch reads ISIIAKESGVGEATITRFTK. In terms of domain architecture, SIS spans 123 to 263; that stretch reads CRDLIMNAKR…YTEVIKEMFS (141 aa).

This is an uncharacterized protein from Clostridium perfringens (strain 13 / Type A).